The following is a 519-amino-acid chain: Asteroid homolog 1 (519 aa).

It belongs to the asteroid family.

It is found in the cytoplasm. Its subcellular location is the mitochondrion. This chain is Asteroid homolog 1 (ast1), found in Schizosaccharomyces pombe (strain 972 / ATCC 24843) (Fission yeast).